The chain runs to 69 residues: Putative membrane protein insertion efficiency factor (69 aa).

This sequence belongs to the UPF0161 family.

The protein resides in the cell membrane. Functionally, could be involved in insertion of integral membrane proteins into the membrane. In Clostridium perfringens (strain SM101 / Type A), this protein is Putative membrane protein insertion efficiency factor.